Here is a 410-residue protein sequence, read N- to C-terminus: Meiotic driver wtf18 (410 aa).

A disordered region spans residues 1-39; sequence MKNKGYPLRSSMDELSTKNDNEIDLEKGPLPEYNSEDGS. Positions 11–29 are enriched in basic and acidic residues; sequence SMDELSTKNDNEIDLEKGP. 10 helical membrane passes run 89–109, 119–139, 149–169, 174–194, 204–224, 229–249, 265–285, 289–309, 319–339, and 353–373; these read LLIS…CVNP, AFFV…FCFF, CIKV…VFLA, VTAV…AKCI, CVKV…VGLY, DLVV…FGCV, CSIS…IWTL, LFGL…TKGL, ATGY…LFFY, and FIGN…GGIG.

This sequence belongs to the WTF family. In terms of assembly, homomer. Forms protein aggregates. The two isoforms can interact with each other and with themselves. High sequence similarity is required for their interaction.

It is found in the spore membrane. The protein resides in the vacuole membrane. Its subcellular location is the ascus epiplasm. The protein localises to the cytoplasm. It localises to the endoplasmic reticulum membrane. Promotes unequal transmission of alleles from the parental zygote to progeny spores by acting as poison/antidote system where the poison and antidote proteins are produced from the same locus; the poison component is trans-acting and targets all spores within an ascus whereas the antidote component is spore-specific, leading to poisoning of all progeny that do not inherit the allele. Functionally, localizes isoform 2 to the vacuole thereby facilitating its degradation. In addition to suppressing isoform 2, also suppresses S.pombe strain 972 wtf13 isoform 2. Its function is as follows. Forms toxic aggregates that disrupt spore maturation. The polypeptide is Meiotic driver wtf18 (Schizosaccharomyces pombe (Fission yeast)).